The following is a 362-amino-acid chain: UDP-N-acetylglucosamine--N-acetylmuramyl-(pentapeptide) pyrophosphoryl-undecaprenol N-acetylglucosamine transferase (362 aa).

Residues 21–23 (TGG), N129, R170, S198, and Q290 contribute to the UDP-N-acetyl-alpha-D-glucosamine site.

This sequence belongs to the glycosyltransferase 28 family. MurG subfamily.

The protein localises to the cell inner membrane. The catalysed reaction is di-trans,octa-cis-undecaprenyl diphospho-N-acetyl-alpha-D-muramoyl-L-alanyl-D-glutamyl-meso-2,6-diaminopimeloyl-D-alanyl-D-alanine + UDP-N-acetyl-alpha-D-glucosamine = di-trans,octa-cis-undecaprenyl diphospho-[N-acetyl-alpha-D-glucosaminyl-(1-&gt;4)]-N-acetyl-alpha-D-muramoyl-L-alanyl-D-glutamyl-meso-2,6-diaminopimeloyl-D-alanyl-D-alanine + UDP + H(+). The protein operates within cell wall biogenesis; peptidoglycan biosynthesis. Functionally, cell wall formation. Catalyzes the transfer of a GlcNAc subunit on undecaprenyl-pyrophosphoryl-MurNAc-pentapeptide (lipid intermediate I) to form undecaprenyl-pyrophosphoryl-MurNAc-(pentapeptide)GlcNAc (lipid intermediate II). This chain is UDP-N-acetylglucosamine--N-acetylmuramyl-(pentapeptide) pyrophosphoryl-undecaprenol N-acetylglucosamine transferase, found in Synechococcus sp. (strain JA-3-3Ab) (Cyanobacteria bacterium Yellowstone A-Prime).